A 331-amino-acid chain; its full sequence is uncharacterized protein (331 aa).

To bacterial alkanal monooxygenase alpha and beta chains.

This is an uncharacterized protein from Bacillus subtilis (strain 168).